The sequence spans 434 residues: Tol-Pal system protein TolB (434 aa).

The first 28 residues, 1–28 (MMNTRVWCKIIGMLALLVWLVSSPSVFA), serve as a signal peptide directing secretion.

It belongs to the TolB family. In terms of assembly, the Tol-Pal system is composed of five core proteins: the inner membrane proteins TolA, TolQ and TolR, the periplasmic protein TolB and the outer membrane protein Pal. They form a network linking the inner and outer membranes and the peptidoglycan layer.

It localises to the periplasm. Part of the Tol-Pal system, which plays a role in outer membrane invagination during cell division and is important for maintaining outer membrane integrity. This chain is Tol-Pal system protein TolB, found in Nitrosococcus oceani (strain ATCC 19707 / BCRC 17464 / JCM 30415 / NCIMB 11848 / C-107).